A 313-amino-acid chain; its full sequence is CBK1 kinase activator protein MOB2 (313 aa).

Residues 1–109 (MSFLNTIRGL…KRSSIQTTKS (109 aa)) form a disordered region. Residues 23–69 (PSNNAIYSHSNLSGNGLRRTQSPTKFSPSKLSSKGAQGSAAYTSSPT) show a composition bias toward polar residues. 4 positions are modified to phosphoserine; by CDC28: serine 44, serine 51, serine 67, and serine 97. A compositionally biased stretch (low complexity) spans 76–97 (QSLQHQDSQSSLQYQQQSGSVS). The segment covering 98–109 (PSKRSSIQTTKS) has biased composition (polar residues).

It belongs to the MOB1/phocein family. In terms of assembly, interacts with protein kinase CBK1 to form the RAM CBK1-MOB2 kinase complex. In terms of processing, phosphorylated by CDC28 at Ser-44, Ser-51, Ser-67, and Ser-97. Phosphorylation occurs during bud emergence and is maintained until the G2/M transition. Dephosphorylated at the end of mitosis. Phosphorylation is required for the maintenance of polarisome components in hyphae.

Its subcellular location is the nucleus. It is found in the cytoplasm. Functionally, functions as an activator subunit for the CBK1 protein kinase. Part of the regulation of ACE2 activity and cellular morphogenesis (RAM) signaling network. The RAM network is critically required for hyphal growth as well as normal vegetative growth, and for polarization of lipid rafts and the actin cytoskeleton. It play an essential role in biofilm formation. The RAM network also plays a role in serum- and antifungal azoles-induced activation of ergosterol biosynthesis genes, especially those involved in the late steps of ergosterol biosynthesis. The chain is CBK1 kinase activator protein MOB2 (MOB2) from Candida albicans (strain SC5314 / ATCC MYA-2876) (Yeast).